A 536-amino-acid chain; its full sequence is MIENDNTFNKDEWEIIEKNYRKGGFSKISKAKKKNGIINGTIVNKKMIAIKKIKFDDKIQFNEVNNLELIKNKNKEMQISSIIDYFGYGIKGKNKLYIYLEFIEGKTIYELKKKKFPLNEKQISIILKKCLETMKFLHNNCNLIHMDLKCDNIILKPNNYDNNNNNNNNNNNNNNNNNNNSNINDDNNNSNSNINDDNNFDIKIIDYGLSQKIGDLKRDHYGTYLPDECILNNVSIVNYTFDVYSLGFISFELFYPTQFEIKPIKLTHIYEYVEKSQISPLFLNFIKKCIGRYLDIDVLEIHPFLNENYDNFENYFKFLKQTPLKRIKYRNGINGENDILRINNSTTITSEQFPNNSKMIEFGDDFNGIINVDYIANKKVVILNNPNYNIINLDFCFSNVEYICIKGIGVLEISKITHNSLETFIYEGEFKNDFILKPYLFTNTKHLILKNYKNYIRHRGIIPEGVTFLELSDSIGIEVIKTFIHLPKSIEELCFGCTEETLKQIERNLILQSINFFIINGKLMKFSKNNNLEYYE.

The region spanning 14–305 (EIIEKNYRKG…IDVLEIHPFL (292 aa)) is the Protein kinase domain. ATP is bound by residues 20 to 28 (YRKGGFSKI) and K51. D147 serves as the catalytic Proton acceptor. Residues 161–192 (DNNNNNNNNNNNNNNNNNNNSNINDDNNNSNS) form a disordered region.

The protein belongs to the protein kinase superfamily. Ser/Thr protein kinase family. The cofactor is Mg(2+).

The catalysed reaction is L-seryl-[protein] + ATP = O-phospho-L-seryl-[protein] + ADP + H(+). It carries out the reaction L-threonyl-[protein] + ATP = O-phospho-L-threonyl-[protein] + ADP + H(+). The chain is Probable serine/threonine-protein kinase DDB_G0268550 from Dictyostelium discoideum (Social amoeba).